The following is a 312-amino-acid chain: Malate dehydrogenase (312 aa).

Residues 7–13 and D34 each bind NAD(+); that span reads GAAGGIG. Residues R81 and R87 each contribute to the substrate site. NAD(+) contacts are provided by residues N94 and 117-119; that span reads ITN. The substrate site is built by N119 and R153. The active-site Proton acceptor is the H177. M227 contributes to the NAD(+) binding site.

This sequence belongs to the LDH/MDH superfamily. MDH type 1 family. As to quaternary structure, homodimer.

The catalysed reaction is (S)-malate + NAD(+) = oxaloacetate + NADH + H(+). Its function is as follows. Catalyzes the reversible oxidation of malate to oxaloacetate. This Escherichia coli (strain SE11) protein is Malate dehydrogenase.